The chain runs to 229 residues: Platelet-activating factor acetylhydrolase IB subunit alpha2 (229 aa).

Residues serine 48, aspartate 193, and histidine 196 contribute to the active site.

The protein belongs to the 'GDSL' lipolytic enzyme family. Platelet-activating factor acetylhydrolase IB beta/gamma subunits subfamily. As to quaternary structure, forms a catalytic dimer which is either homodimer (alpha2/alpha2 homodimer) or heterodimer with PAFAH1B3 (alpha2/alpha1 heterodimer). Component of the cytosolic (PAF-AH (I)) heterotetrameric enzyme, which is composed of PAFAH1B1 (beta), PAFAH1B2 (alpha2) and PAFAH1B3 (alpha1) subunits. The catalytic activity of the enzyme resides in the alpha1 (PAFAH1B3) and alpha2 (PAFAH1B2) subunits, whereas the beta subunit (PAFAH1B1) has regulatory activity. Trimer formation is not essential for the catalytic activity.

It localises to the cytoplasm. The enzyme catalyses a 1-O-alkyl-2-acetyl-sn-glycero-3-phosphocholine + H2O = a 1-O-alkyl-sn-glycero-3-phosphocholine + acetate + H(+). It carries out the reaction 1-O-hexadecyl-2-acetyl-sn-glycero-3-phosphocholine + H2O = 1-O-hexadecyl-sn-glycero-3-phosphocholine + acetate + H(+). The catalysed reaction is 1-O-hexadecyl-2-acetyl-sn-glycero-3-phosphate + H2O = 1-O-hexadecyl-sn-glycero-3-phosphate + acetate + H(+). It catalyses the reaction 1-O-hexadecyl-2-acetyl-sn-glycero-3-phosphoethanolamine + H2O = 1-O-hexadecyl-sn-glycero-3-phosphoethanolamine + acetate + H(+). In terms of biological role, alpha2 catalytic subunit of the cytosolic type I platelet-activating factor (PAF) acetylhydrolase (PAF-AH (I)) heterotetrameric enzyme that catalyzes the hydrolyze of the acetyl group at the sn-2 position of PAF and its analogs and modulates the action of PAF. This is Platelet-activating factor acetylhydrolase IB subunit alpha2 (PAFAH1B2) from Gallus gallus (Chicken).